Here is a 1213-residue protein sequence, read N- to C-terminus: Genetic suppressor element 1 (1213 aa).

Positions Met-1–Glu-154 are disordered. Ser-10 carries the post-translational modification Phosphoserine. Residues Met-15–Pro-33 show a composition bias toward polar residues. Low complexity-rich tracts occupy residues Ser-51–Ala-63 and Gly-76–Pro-89. 2 positions are modified to phosphoserine: Ser-84 and Ser-95. Low complexity predominate over residues Val-103–Gly-114. Residue Arg-305 is modified to Asymmetric dimethylarginine. The stretch at His-319 to Ala-402 forms a coiled coil. The disordered stretch occupies residues Leu-326–Leu-384. Basic and acidic residues predominate over residues Leu-331–Leu-384. Thr-433 is modified (phosphothreonine). Lys-496 is modified (N6-acetyllysine). Disordered stretches follow at residues Leu-527–Val-579 and Ser-630–Gly-719. Composition is skewed to basic and acidic residues over residues Glu-537 to Pro-560 and Ser-630 to Pro-643. A compositionally biased stretch (pro residues) spans Gln-648–Arg-657. Over residues Ser-681 to Gly-700 the composition is skewed to polar residues. Residue Lys-739 is modified to N6-acetyllysine. 4 positions are modified to phosphoserine: Ser-766, Ser-826, Ser-828, and Ser-857. 3 disordered regions span residues Arg-816 to Pro-858, Leu-898 to Gly-979, and Glu-1065 to Gln-1118. Residues Thr-847–Pro-858 show a composition bias toward polar residues. Thr-905 is subject to Phosphothreonine. Ser-907 bears the Phosphoserine mark. Polar residues predominate over residues Glu-1065–Gln-1081. The stretch at Gln-1093 to Ala-1197 forms a coiled coil. The segment covering Ala-1095 to Glu-1112 has biased composition (acidic residues). Residue Ser-1099 is modified to Phosphoserine.

As to quaternary structure, may be a component of a BHC histone deacetylase complex that contains HDAC1, HDAC2, HMG20B/BRAF35, KDM1A, RCOR1/CoREST, PHF21A/BHC80, ZMYM2, ZNF217, ZMYM3, GSE1 and GTF2I.

The polypeptide is Genetic suppressor element 1 (Gse1) (Mus musculus (Mouse)).